A 626-amino-acid polypeptide reads, in one-letter code: Elongation factor 4 (626 aa).

The region spanning 14 to 195 is the tr-type G domain; it reads SVIRNFCIIA…QIVMDVPAPH (182 aa). Residues 26 to 31 and 142 to 145 each bind GTP; these read DHGKST and NKID. Positions 603–626 are disordered; that stretch reads LSTGEDSNDRDTKDKIRAAQKTEG. Over residues 609-626 the composition is skewed to basic and acidic residues; it reads SNDRDTKDKIRAAQKTEG.

Belongs to the TRAFAC class translation factor GTPase superfamily. Classic translation factor GTPase family. LepA subfamily.

Its subcellular location is the cell membrane. The catalysed reaction is GTP + H2O = GDP + phosphate + H(+). Its function is as follows. Required for accurate and efficient protein synthesis under certain stress conditions. May act as a fidelity factor of the translation reaction, by catalyzing a one-codon backward translocation of tRNAs on improperly translocated ribosomes. Back-translocation proceeds from a post-translocation (POST) complex to a pre-translocation (PRE) complex, thus giving elongation factor G a second chance to translocate the tRNAs correctly. Binds to ribosomes in a GTP-dependent manner. This is Elongation factor 4 from Bifidobacterium longum (strain DJO10A).